Consider the following 185-residue polypeptide: Endonuclease IV (185 aa).

It catalyses the reaction Endonucleolytic cleavage of the 5' phosphodiester bond of deoxycytidine in single-stranded DNA.. Functionally, cleaves single-stranded DNA in a dC-specific manner. The cleavage occurs exclusively at the 5'-proximal position (dC1) within a dCs tract having a minimal size of 6 bases. These specific cleavages may have a detrimental effect on the replication of host dC-containing DNA. This is Endonuclease IV (denB) from Enterobacteria phage T4 (Bacteriophage T4).